We begin with the raw amino-acid sequence, 436 residues long: Carboxypeptidase A5 (436 aa).

The N-terminal stretch at 1-33 (MQGTPAGGTSPGPSPMDRQTLLVFSLILAAALG) is a signal peptide. Positions 34 to 126 (QMNFTGDQVL…EREAMAKSRR (93 aa)) are cleaved as a propeptide — activation peptide. Residues 138–431 (SYHTLEEISS…MALRTIMEHT (294 aa)) form the Peptidase M14 domain. Zn(2+) contacts are provided by His196 and Glu199. Substrate-binding positions include 196–199 (HSRE), Arg254, and 271–272 (NR). An intrachain disulfide couples Cys265 to Cys288. His323 is a Zn(2+) binding site. Substrate-binding positions include 324 to 325 (SY) and Tyr375. Glu397 serves as the catalytic Proton donor/acceptor.

This sequence belongs to the peptidase M14 family. Zn(2+) serves as cofactor.

The protein localises to the secreted. This chain is Carboxypeptidase A5 (CPA5), found in Macaca fascicularis (Crab-eating macaque).